The following is a 311-amino-acid chain: 2-phospho-L-lactate transferase (311 aa).

Residues Asp-52 and Arg-91 each coordinate 7,8-didemethyl-8-hydroxy-5-deazariboflavin.

The protein belongs to the CofD family. In terms of assembly, homodimer. Mg(2+) serves as cofactor.

The enzyme catalyses (2S)-lactyl-2-diphospho-5'-guanosine + 7,8-didemethyl-8-hydroxy-5-deazariboflavin = oxidized coenzyme F420-0 + GMP + H(+). The protein operates within cofactor biosynthesis; coenzyme F420 biosynthesis. Inhibited by EDTA in vitro. Its function is as follows. Catalyzes the transfer of the 2-phospholactate moiety from (2S)-lactyl-2-diphospho-5'-guanosine to 7,8-didemethyl-8-hydroxy-5-deazariboflavin (FO) with the formation of oxidized coenzyme F420-0 and GMP. This is 2-phospho-L-lactate transferase from Methanocaldococcus jannaschii (strain ATCC 43067 / DSM 2661 / JAL-1 / JCM 10045 / NBRC 100440) (Methanococcus jannaschii).